The chain runs to 174 residues: ATP synthase subunit delta, sodium ion specific (174 aa).

The protein belongs to the ATPase delta chain family. F-type ATPases have 2 components, F(1) - the catalytic core - and F(0) - the membrane proton channel. F(1) has five subunits: alpha(3), beta(3), gamma(1), delta(1), epsilon(1). F(0) has three main subunits: a(1), b(2) and c(10-14). The alpha and beta chains form an alternating ring which encloses part of the gamma chain. F(1) is attached to F(0) by a central stalk formed by the gamma and epsilon chains, while a peripheral stalk is formed by the delta and b chains.

The protein resides in the cell inner membrane. In terms of biological role, f(1)F(0) ATP synthase produces ATP from ADP in the presence of a proton or sodium gradient. F-type ATPases consist of two structural domains, F(1) containing the extramembraneous catalytic core and F(0) containing the membrane proton channel, linked together by a central stalk and a peripheral stalk. During catalysis, ATP synthesis in the catalytic domain of F(1) is coupled via a rotary mechanism of the central stalk subunits to proton translocation. Its function is as follows. This protein is part of the stalk that links CF(0) to CF(1). It either transmits conformational changes from CF(0) to CF(1) or is implicated in proton conduction. The protein is ATP synthase subunit delta, sodium ion specific of Propionigenium modestum.